A 387-amino-acid chain; its full sequence is Ferrochelatase (387 aa).

Fe cation-binding residues include His196 and Glu277.

This sequence belongs to the ferrochelatase family.

Its subcellular location is the cytoplasm. It catalyses the reaction heme b + 2 H(+) = protoporphyrin IX + Fe(2+). It participates in porphyrin-containing compound metabolism; protoheme biosynthesis; protoheme from protoporphyrin-IX: step 1/1. In terms of biological role, catalyzes the ferrous insertion into protoporphyrin IX. This chain is Ferrochelatase, found in Cyanothece sp. (strain PCC 7425 / ATCC 29141).